Reading from the N-terminus, the 493-residue chain is Adenylyltransferase and sulfurtransferase uba4 (493 aa).

ATP is bound by residues glycine 99, aspartate 120, 127-131 (SNLHR), lysine 144, and 188-189 (DN). Residues cysteine 237 and cysteine 240 each coordinate Zn(2+). The Glycyl thioester intermediate; for adenylyltransferase activity role is filled by cysteine 254. Positions 316 and 319 each coordinate Zn(2+). Residues 376-491 (INKEPTIIDV…WREQIDPDWP (116 aa)) enclose the Rhodanese domain. Cysteine 446 serves as the catalytic Cysteine persulfide intermediate; for sulfurtransferase activity.

The protein in the N-terminal section; belongs to the HesA/MoeB/ThiF family. UBA4 subfamily. The cofactor is Zn(2+).

The protein localises to the cytoplasm. It is found in the cytosol. It carries out the reaction [molybdopterin-synthase sulfur-carrier protein]-C-terminal Gly-Gly + ATP + H(+) = [molybdopterin-synthase sulfur-carrier protein]-C-terminal Gly-Gly-AMP + diphosphate. The catalysed reaction is [molybdopterin-synthase sulfur-carrier protein]-C-terminal Gly-Gly-AMP + S-sulfanyl-L-cysteinyl-[cysteine desulfurase] + AH2 = [molybdopterin-synthase sulfur-carrier protein]-C-terminal-Gly-aminoethanethioate + L-cysteinyl-[cysteine desulfurase] + A + AMP + 2 H(+). It participates in tRNA modification; 5-methoxycarbonylmethyl-2-thiouridine-tRNA biosynthesis. The protein operates within cofactor biosynthesis; molybdopterin biosynthesis. In terms of biological role, plays a central role in 2-thiolation of mcm(5)S(2)U at tRNA wobble positions of cytosolic tRNA(Lys), tRNA(Glu) and tRNA(Gln). Also essential during biosynthesis of the molybdenum cofactor. Acts by mediating the C-terminal thiocarboxylation of sulfur carriers urm1 and mocs2a. Its N-terminus first activates urm1 and mocs2a as acyl-adenylates (-COAMP), then the persulfide sulfur on the catalytic cysteine is transferred to urm1 and mocs2a to form thiocarboxylation (-COSH) of their C-terminus. The reaction probably involves hydrogen sulfide that is generated from the persulfide intermediate and that acts as a nucleophile towards urm1 and mocs2a. Subsequently, a transient disulfide bond is formed. Does not use thiosulfate as sulfur donor; nfs1 probably acting as a sulfur donor for thiocarboxylation reactions. This is Adenylyltransferase and sulfurtransferase uba4 from Aspergillus fumigatus (strain ATCC MYA-4609 / CBS 101355 / FGSC A1100 / Af293) (Neosartorya fumigata).